The sequence spans 217 residues: Adenylate kinase (217 aa).

10 to 15 serves as a coordination point for ATP; it reads GAGKGT. An NMP region spans residues 30–59; it reads STGDMLRAAVKAGTPLGLEAKKVMDSGGLV. AMP contacts are provided by residues Thr-31, Arg-36, 57 to 59, 85 to 88, and Gln-92; these read GLV and GFPR. The interval 122–159 is LID; it reads GRRVHVASGRTYHVKFNPPKVAGVDDVTGEPLIQRDDD. ATP is bound by residues Arg-123 and 132–133; that span reads TY. Positions 156 and 167 each coordinate AMP. Gly-203 contributes to the ATP binding site.

It belongs to the adenylate kinase family. In terms of assembly, monomer.

Its subcellular location is the cytoplasm. The enzyme catalyses AMP + ATP = 2 ADP. The protein operates within purine metabolism; AMP biosynthesis via salvage pathway; AMP from ADP: step 1/1. In terms of biological role, catalyzes the reversible transfer of the terminal phosphate group between ATP and AMP. Plays an important role in cellular energy homeostasis and in adenine nucleotide metabolism. The polypeptide is Adenylate kinase (Methylibium petroleiphilum (strain ATCC BAA-1232 / LMG 22953 / PM1)).